A 307-amino-acid polypeptide reads, in one-letter code: Recombination-associated protein RdgC (307 aa).

It belongs to the RdgC family.

It localises to the cytoplasm. Its subcellular location is the nucleoid. May be involved in recombination. The protein is Recombination-associated protein RdgC of Colwellia psychrerythraea (strain 34H / ATCC BAA-681) (Vibrio psychroerythus).